Reading from the N-terminus, the 280-residue chain is Bifunctional protein FolD (280 aa).

NADP(+) contacts are provided by residues 164–166, serine 189, and valine 230; that span reads GRS.

The protein belongs to the tetrahydrofolate dehydrogenase/cyclohydrolase family. In terms of assembly, homodimer.

The enzyme catalyses (6R)-5,10-methylene-5,6,7,8-tetrahydrofolate + NADP(+) = (6R)-5,10-methenyltetrahydrofolate + NADPH. It catalyses the reaction (6R)-5,10-methenyltetrahydrofolate + H2O = (6R)-10-formyltetrahydrofolate + H(+). It functions in the pathway one-carbon metabolism; tetrahydrofolate interconversion. Its function is as follows. Catalyzes the oxidation of 5,10-methylenetetrahydrofolate to 5,10-methenyltetrahydrofolate and then the hydrolysis of 5,10-methenyltetrahydrofolate to 10-formyltetrahydrofolate. This Geotalea daltonii (strain DSM 22248 / JCM 15807 / FRC-32) (Geobacter daltonii) protein is Bifunctional protein FolD.